Reading from the N-terminus, the 303-residue chain is Vacuolar protein sorting-associated protein 26B (303 aa).

It belongs to the VPS26 family. In terms of assembly, component of the retromer complex which consists of VPS29 (MAG1), VPS26 (VPS26A or VPS26B), VPS35 (VPS35A or VPS35B or VPS35C), VPS5/17 (SNX1 or SNX2A or SNX2B). Component of a retromer subcomplex consisting of VPS29 (MAG1), VPS26 (VPS26A or VPS26B), VPS35 (VPS35A or VPS35B or VPS35C).

Its subcellular location is the cytoplasm. The protein localises to the endosome membrane. It is found in the prevacuolar compartment membrane. It localises to the golgi apparatus. The protein resides in the trans-Golgi network membrane. Functionally, plays a role in vesicular protein sorting. Component of the membrane-associated retromer complex which is essential in endosome-to-Golgi retrograde transport. The VPS29-VPS26-VPS35 subcomplex may be involved in recycling of specific cargos from endosome to the plasma membrane. The chain is Vacuolar protein sorting-associated protein 26B (VPS26B) from Arabidopsis thaliana (Mouse-ear cress).